A 251-amino-acid polypeptide reads, in one-letter code: Chorismate mutase (251 aa).

The Chorismate mutase domain maps to 1–251; it reads MSLVNEKLKL…EVDYLLARLL (251 aa). Positions 74, 75, 134, 136, and 137 each coordinate L-tyrosine. Residues Asn134, Gly136, and Ser137 each contribute to the L-tryptophan site.

As to quaternary structure, homodimer.

The protein resides in the cytoplasm. It carries out the reaction chorismate = prephenate. The protein operates within metabolic intermediate biosynthesis; prephenate biosynthesis; prephenate from chorismate: step 1/1. Its activity is regulated as follows. Each dimer has two allosteric binding sites that can bind the regulatory effectors tryptophan or tyrosine. Can bind either one tryptophan or one tyrosine, two tryptophan or two tyrosine or one tryptophan and one tyrosine, which differentially affect the catalytic activity. Activated by tryptophan and subject to feedback inhibition by tyrosine. In the presence of both tryptophan and tyrosine, the enzyme is in the activated state. Functionally, catalyzes the Claisen rearrangement of chorismate to prephenate. Acts at the first branch point in the aromatic amino acid pathway where it steers biosynthesis towards phenylalanine and tyrosine, and away from tryptophan. The chain is Chorismate mutase from Schizosaccharomyces pombe (strain 972 / ATCC 24843) (Fission yeast).